Here is a 495-residue protein sequence, read N- to C-terminus: Aspartyl/glutamyl-tRNA(Asn/Gln) amidotransferase subunit B (495 aa).

The protein belongs to the GatB/GatE family. GatB subfamily. As to quaternary structure, heterotrimer of A, B and C subunits.

It catalyses the reaction L-glutamyl-tRNA(Gln) + L-glutamine + ATP + H2O = L-glutaminyl-tRNA(Gln) + L-glutamate + ADP + phosphate + H(+). The enzyme catalyses L-aspartyl-tRNA(Asn) + L-glutamine + ATP + H2O = L-asparaginyl-tRNA(Asn) + L-glutamate + ADP + phosphate + 2 H(+). Functionally, allows the formation of correctly charged Asn-tRNA(Asn) or Gln-tRNA(Gln) through the transamidation of misacylated Asp-tRNA(Asn) or Glu-tRNA(Gln) in organisms which lack either or both of asparaginyl-tRNA or glutaminyl-tRNA synthetases. The reaction takes place in the presence of glutamine and ATP through an activated phospho-Asp-tRNA(Asn) or phospho-Glu-tRNA(Gln). This Halobacterium salinarum (strain ATCC 700922 / JCM 11081 / NRC-1) (Halobacterium halobium) protein is Aspartyl/glutamyl-tRNA(Asn/Gln) amidotransferase subunit B.